A 184-amino-acid polypeptide reads, in one-letter code: MGIEEKLPSGFLLTTVEGLAGYVRKGSLWPASFGLACCAIEMMATAGGRFDIARFGMEAFRASPRQADLMIVAGRVSQKMAPVLRQIYDQMVEPKWVLAMGVCASSGGMFNNYAIVQGVDHIVPVDIYLPGCPPRPEMLLNAILTLHEKIQQMPLGVHRDEVARAAEQAALAATPTIQMKGLLR.

Residues Cys37, Cys38, Cys103, and Cys132 each contribute to the [4Fe-4S] cluster site.

The protein belongs to the complex I 20 kDa subunit family. In terms of assembly, NDH-1 is composed of 14 different subunits. Subunits NuoB, C, D, E, F, and G constitute the peripheral sector of the complex. Requires [4Fe-4S] cluster as cofactor.

It is found in the cell membrane. It carries out the reaction a quinone + NADH + 5 H(+)(in) = a quinol + NAD(+) + 4 H(+)(out). NDH-1 shuttles electrons from NADH, via FMN and iron-sulfur (Fe-S) centers, to quinones in the respiratory chain. The immediate electron acceptor for the enzyme in this species is believed to be a menaquinone. Couples the redox reaction to proton translocation (for every two electrons transferred, four hydrogen ions are translocated across the cytoplasmic membrane), and thus conserves the redox energy in a proton gradient. This Rhodococcus opacus (strain B4) protein is NADH-quinone oxidoreductase subunit B.